A 668-amino-acid polypeptide reads, in one-letter code: DNA ligase (668 aa).

NAD(+) is bound by residues 37 to 41 (DNVYD), 86 to 87 (SM), and E116. K118 acts as the N6-AMP-lysine intermediate in catalysis. R139, E173, K288, and K312 together coordinate NAD(+). Residues C406, C409, C424, and C429 each coordinate Zn(2+). Residues 591–668 (APDNPFKDKT…TEEEAIAQIE (78 aa)) enclose the BRCT domain.

Belongs to the NAD-dependent DNA ligase family. LigA subfamily. Mg(2+) serves as cofactor. The cofactor is Mn(2+).

The catalysed reaction is NAD(+) + (deoxyribonucleotide)n-3'-hydroxyl + 5'-phospho-(deoxyribonucleotide)m = (deoxyribonucleotide)n+m + AMP + beta-nicotinamide D-nucleotide.. DNA ligase that catalyzes the formation of phosphodiester linkages between 5'-phosphoryl and 3'-hydroxyl groups in double-stranded DNA using NAD as a coenzyme and as the energy source for the reaction. It is essential for DNA replication and repair of damaged DNA. This chain is DNA ligase, found in Lactobacillus helveticus (strain DPC 4571).